We begin with the raw amino-acid sequence, 153 residues long: Probable phospholipase A2 homolog 2 (153 aa).

An N-terminal signal peptide occupies residues 1–25 (MRFFLKLAPRCSVLLLLLLVTASRG). 6 cysteine pairs are disulfide-bonded: C42–C70, C46–C76, C51–C123, C63–C83, C82–C109, and C89–C102. Residues Y62, G64, and Y67 each coordinate Ca(2+). Residue H86 is part of the active site. D87 provides a ligand contact to Ca(2+).

It belongs to the phospholipase A2 family. The cofactor is Ca(2+).

The protein resides in the secreted. The enzyme catalyses a 1,2-diacyl-sn-glycero-3-phosphocholine + H2O = a 1-acyl-sn-glycero-3-phosphocholine + a fatty acid + H(+). Its function is as follows. PA2 catalyzes the calcium-dependent hydrolysis of the 2-acyl groups in 3-sn-phosphoglycerides. Releases lysophospholipids (LPLs) and free fatty acids (FFAs) from membrane phospholipids in response to hormones and other external stimuli. In Oryza sativa subsp. japonica (Rice), this protein is Probable phospholipase A2 homolog 2 (PLA2-II).